The following is a 587-amino-acid chain: Monocopper oxidase-like protein SKU5 (587 aa).

The first 20 residues, 1-20 (MDLFKILLLVFFVNISFCFA), serve as a signal peptide directing secretion. 2 N-linked (GlcNAc...) asparagine glycosylation sites follow: Asn-14 and Asn-58. His-80 contributes to the Cu cation binding site. 10 N-linked (GlcNAc...) asparagine glycosylation sites follow: Asn-107, Asn-169, Asn-200, Asn-257, Asn-278, Asn-293, Asn-342, Asn-362, Asn-430, and Asn-444. His-452 is a Cu cation binding site. Residue Asn-534 is glycosylated (N-linked (GlcNAc...) asparagine). The GPI-anchor amidated serine moiety is linked to residue Ser-562. The propeptide at 563 to 587 (ASKSIGFTSLSMVVMALVMMMMLQH) is removed in mature form.

The protein belongs to the multicopper oxidase family. The cofactor is Cu cation. In terms of tissue distribution, expressed in roots, hypocotyls, cotyledons, leaves, stems and flowers.

It localises to the secreted. The protein localises to the cell wall. The protein resides in the cell membrane. Its function is as follows. May be a monocopper oxidase of unknown specificity. Involved in directional growth processes, possibly by participating in cell wall expansion. The chain is Monocopper oxidase-like protein SKU5 (SKU5) from Arabidopsis thaliana (Mouse-ear cress).